A 250-amino-acid polypeptide reads, in one-letter code: NAD(P)H-quinone oxidoreductase subunit K (250 aa).

[4Fe-4S] cluster is bound by residues Cys60, Cys61, Cys125, and Cys156. Residues 230 to 250 are disordered; that stretch reads ELNTSEIDASPASQPSSTYES. The span at 231–250 shows a compositional bias: polar residues; that stretch reads LNTSEIDASPASQPSSTYES.

This sequence belongs to the complex I 20 kDa subunit family. In terms of assembly, NDH-1 can be composed of about 15 different subunits; different subcomplexes with different compositions have been identified which probably have different functions. [4Fe-4S] cluster serves as cofactor.

The protein localises to the cellular thylakoid membrane. It carries out the reaction a plastoquinone + NADH + (n+1) H(+)(in) = a plastoquinol + NAD(+) + n H(+)(out). It catalyses the reaction a plastoquinone + NADPH + (n+1) H(+)(in) = a plastoquinol + NADP(+) + n H(+)(out). NDH-1 shuttles electrons from an unknown electron donor, via FMN and iron-sulfur (Fe-S) centers, to quinones in the respiratory and/or the photosynthetic chain. The immediate electron acceptor for the enzyme in this species is believed to be plastoquinone. Couples the redox reaction to proton translocation, and thus conserves the redox energy in a proton gradient. Cyanobacterial NDH-1 also plays a role in inorganic carbon-concentration. This is NAD(P)H-quinone oxidoreductase subunit K from Prochlorococcus marinus (strain MIT 9303).